The sequence spans 238 residues: Uridylate kinase (238 aa).

ATP is bound at residue 12–15 (KLSG). The segment at 20–25 (GEKGFG) is involved in allosteric activation by GTP. Glycine 54 lines the UMP pocket. ATP contacts are provided by glycine 55 and arginine 59. Residues aspartate 72 and 133–140 (TGNPYFST) contribute to the UMP site. The ATP site is built by tyrosine 166 and aspartate 169.

This sequence belongs to the UMP kinase family. Homohexamer.

It localises to the cytoplasm. It catalyses the reaction UMP + ATP = UDP + ADP. Its pathway is pyrimidine metabolism; CTP biosynthesis via de novo pathway; UDP from UMP (UMPK route): step 1/1. Its activity is regulated as follows. Allosterically activated by GTP. Inhibited by UTP. Functionally, catalyzes the reversible phosphorylation of UMP to UDP. This chain is Uridylate kinase, found in Clostridium botulinum (strain Langeland / NCTC 10281 / Type F).